The primary structure comprises 594 residues: Arginine--tRNA ligase (594 aa).

A 'HIGH' region motif is present at residues 139 to 149; the sequence is ANPTGPLHVGH.

Belongs to the class-I aminoacyl-tRNA synthetase family. As to quaternary structure, monomer.

It localises to the cytoplasm. The catalysed reaction is tRNA(Arg) + L-arginine + ATP = L-arginyl-tRNA(Arg) + AMP + diphosphate. In Burkholderia mallei (strain NCTC 10247), this protein is Arginine--tRNA ligase.